An 81-amino-acid polypeptide reads, in one-letter code: Protein RALF-like 6 (81 aa).

An N-terminal signal peptide occupies residues 1–29; it reads MAAHKKSHIRIFFVSVMIILSLFSGFGEG. Disulfide bonds link cysteine 46–cysteine 54 and cysteine 66–cysteine 72.

It belongs to the plant rapid alkalinization factor (RALF) family.

It is found in the secreted. Cell signaling peptide that may regulate plant stress, growth, and development. Mediates a rapid alkalinization of extracellular space by mediating a transient increase in the cytoplasmic Ca(2+) concentration leading to a calcium-dependent signaling events through a cell surface receptor and a concomitant activation of some intracellular mitogen-activated protein kinases. The protein is Protein RALF-like 6 (RALFL6) of Arabidopsis thaliana (Mouse-ear cress).